Consider the following 306-residue polypeptide: Protein translocase subunit SecF (306 aa).

A run of 6 helical transmembrane segments spans residues Ala-17 to Ile-37, Gly-134 to Trp-154, Leu-158 to Phe-178, Thr-185 to Phe-205, Leu-232 to Gly-254, and Val-268 to Leu-288.

It belongs to the SecD/SecF family. SecF subfamily. Forms a complex with SecD. Part of the essential Sec protein translocation apparatus which comprises SecA, SecYEG and auxiliary proteins SecDF-YajC and YidC.

It localises to the cell inner membrane. In terms of biological role, part of the Sec protein translocase complex. Interacts with the SecYEG preprotein conducting channel. SecDF uses the proton motive force (PMF) to complete protein translocation after the ATP-dependent function of SecA. This chain is Protein translocase subunit SecF, found in Pseudomonas aeruginosa (strain ATCC 15692 / DSM 22644 / CIP 104116 / JCM 14847 / LMG 12228 / 1C / PRS 101 / PAO1).